A 407-amino-acid polypeptide reads, in one-letter code: Imidazolonepropionase (407 aa).

Fe(3+) contacts are provided by His-68 and His-70. Zn(2+) contacts are provided by His-68 and His-70. 4-imidazolone-5-propanoate-binding residues include Arg-77, Tyr-140, and His-173. N-formimidoyl-L-glutamate is bound at residue Tyr-140. His-238 serves as a coordination point for Fe(3+). His-238 is a binding site for Zn(2+). Gln-241 is a binding site for 4-imidazolone-5-propanoate. A Fe(3+)-binding site is contributed by Asp-313. Asp-313 is a binding site for Zn(2+). Positions 315 and 317 each coordinate N-formimidoyl-L-glutamate. Thr-318 lines the 4-imidazolone-5-propanoate pocket.

This sequence belongs to the metallo-dependent hydrolases superfamily. HutI family. It depends on Zn(2+) as a cofactor. The cofactor is Fe(3+).

The protein localises to the cytoplasm. It catalyses the reaction 4-imidazolone-5-propanoate + H2O = N-formimidoyl-L-glutamate. Its pathway is amino-acid degradation; L-histidine degradation into L-glutamate; N-formimidoyl-L-glutamate from L-histidine: step 3/3. In terms of biological role, catalyzes the hydrolytic cleavage of the carbon-nitrogen bond in imidazolone-5-propanoate to yield N-formimidoyl-L-glutamate. It is the third step in the universal histidine degradation pathway. The polypeptide is Imidazolonepropionase (Burkholderia lata (strain ATCC 17760 / DSM 23089 / LMG 22485 / NCIMB 9086 / R18194 / 383)).